We begin with the raw amino-acid sequence, 946 residues long: Zinc finger CCCH-type antiviral protein 1 (946 aa).

Residues 1–254 (MTDPEVFCFI…DRSKSRDRFH (254 aa)) are N-terminal domain. Positions 69–76 (RARVCRRK) match the Nuclear localization signal motif. 4 C3H1-type zinc fingers span residues 73–86 (CRRK…DSLH), 87–113 (LCKL…HDVL), 150–172 (CKSY…ERLH), and 173–194 (ICEH…HNLM). 2 disordered regions span residues 221–283 (NKHT…KDPL) and 302–354 (RAQL…AAGF). The interval 224–254 (TRRNPPSMRAPHPHRRGGAHRDRSKSRDRFH) is binding to EXOSC5. Over residues 242–257 (AHRDRSKSRDRFHHNS) the composition is skewed to basic and acidic residues. Ser257 carries the phosphoserine modification. Ser262 is subject to Phosphoserine; by GSK3-beta. Residues Ser265, Ser269, and Ser273 each carry the phosphoserine modification. Thr277 carries the phosphothreonine modification. Positions 283–290 (LEDVSADV) match the Nuclear export signal motif. Phosphoserine occurs at positions 324 and 350. The Nuclear localization signal motif lies at 412–413 (KR). Ser425 is modified (phosphoserine). The interval 461–491 (NPAWPGTSTHNGPNGFSQIMDETPNVSKSSP) is disordered. A compositionally biased stretch (polar residues) spans 466 to 477 (GTSTHNGPNGFS). Tyr508 bears the Phosphotyrosine mark. The disordered stretch occupies residues 523–570 (GETTTPVQGSNRLPPSPLSSSTSHRVAASGSPGKSSTHASVSPASEPS). A compositionally biased stretch (polar residues) spans 524 to 533 (ETTTPVQGSN). The residue at position 553 (Ser553) is a Phosphoserine. Residues 554–567 (PGKSSTHASVSPAS) are compositionally biased toward polar residues. Residues Ser583 and Ser680 each carry the phosphoserine modification. Residues 684–771 (FVEKTLNSVF…ASKTQRHVVR (88 aa)) enclose the WWE domain. The PARP catalytic domain occupies 805-946 (SPQRNASTVS…SLDSSGLQRK (142 aa)).

It belongs to the ARTD/PARP family. In terms of assembly, homodimer or homooligomer. Homooligomerization is essential for its antiviral activity. Interacts with EXOSC5. Interacts (via N-terminal domain) with DDX17 in an RNA-independent manner. Interacts with EXOSC3, EXOSC7, DCP2 and DCP1A. Interacts with PARN in an RNA-independent manner. Interacts with XRN1 in an RNA-dependent manner. Interacts (via N-terminal domain) with DHX30 (via N-terminus) in an RNA-independent manner. Isoform 2 interacts (via zinc-fingers) with RIGI in an RNA-dependent manner. Phosphorylation at Ser-273 is essential for sequential phosphorylation of Ser-269, Ser-265, Ser-262 and Ser-257 by GSK3-beta. Phosphorylation by GSK3-beta enhances its antiviral activity.

Its subcellular location is the cytoplasm. The protein localises to the nucleus. Functionally, antiviral protein which inhibits the replication of viruses by recruiting the cellular RNA degradation machineries to degrade the viral mRNAs. Binds to a ZAP-responsive element (ZRE) present in the target viral mRNA, recruits cellular poly(A)-specific ribonuclease PARN to remove the poly(A) tail, and the 3'-5' exoribonuclease complex exosome to degrade the RNA body from the 3'-end. It also recruits the decapping complex DCP1-DCP2 through RNA helicase p72 (DDX17) to remove the cap structure of the viral mRNA to initiate its degradation from the 5'-end. Its target viruses belong to families which include retroviridae: human immunodeficiency virus type 1 (HIV-1) and moloney and murine leukemia virus (MoMLV), filoviridae: ebola virus (EBOV) and marburg virus (MARV), togaviridae: sindbis virus (SINV) and Ross river virus (RRV). Specifically targets the multiply spliced but not unspliced or singly spliced HIV-1 mRNAs for degradation. Isoform 1 is a more potent viral inhibitor than isoform 2. Isoform 2 acts as a positive regulator of RIG-I signaling resulting in activation of the downstream effector IRF3 leading to the expression of type I IFNs and IFN stimulated genes (ISGs). This is Zinc finger CCCH-type antiviral protein 1 (Zc3hav1) from Mus musculus (Mouse).